A 308-amino-acid polypeptide reads, in one-letter code: D-alanine--D-alanine ligase (308 aa).

One can recognise an ATP-grasp domain in the interval 105–302 (KAIFKALGLD…FPELCERILD (198 aa)). 133-188 (DLPFGVPCVVKPAGEGSSVGVQIVKDAARLADACREAARYKGDVVVERYVKGTEVN) provides a ligand contact to ATP. Asp256, Glu269, and Asn271 together coordinate Mg(2+).

This sequence belongs to the D-alanine--D-alanine ligase family. The cofactor is Mg(2+). Mn(2+) is required as a cofactor.

It is found in the cytoplasm. It catalyses the reaction 2 D-alanine + ATP = D-alanyl-D-alanine + ADP + phosphate + H(+). The protein operates within cell wall biogenesis; peptidoglycan biosynthesis. Its function is as follows. Cell wall formation. This Anaeromyxobacter sp. (strain Fw109-5) protein is D-alanine--D-alanine ligase.